Reading from the N-terminus, the 231-residue chain is MLKLQKKLKNDYGLVFNDEDLLKTAFTHSSFTNEERLPKIANNERLEFLGDVALSLVISDYLYRTYPEKLEGELSKMRSSIVRTESLANFSRSCGFGEFLRLGHGEEKMGGRDRETTLENLFEAFLGALFIDQGMDEVRKFIQHVVIPHVKNDDYVKVIDYKTELQEVLQIGGETTISYKILKEEGPAHDRSFVAAVFNNGKELGRGLGKSKKVAEQKAAENAIKGQNHVS.

An RNase III domain is found at 5–134; the sequence is QKKLKNDYGL…FLGALFIDQG (130 aa). E47 is a Mg(2+) binding site. The active site involves D51. Positions 120 and 123 each coordinate Mg(2+). Residue E123 is part of the active site. The region spanning 160 to 229 is the DRBM domain; it reads DYKTELQEVL…AENAIKGQNH (70 aa).

The protein belongs to the ribonuclease III family. As to quaternary structure, homodimer. Mg(2+) is required as a cofactor.

It is found in the cytoplasm. It carries out the reaction Endonucleolytic cleavage to 5'-phosphomonoester.. In terms of biological role, digests double-stranded RNA. Involved in the processing of primary rRNA transcript to yield the immediate precursors to the large and small rRNAs (23S and 16S). Processes some mRNAs, and tRNAs when they are encoded in the rRNA operon. Processes pre-crRNA and tracrRNA of type II CRISPR loci if present in the organism. The sequence is that of Ribonuclease 3 from Lactococcus lactis subsp. lactis (strain IL1403) (Streptococcus lactis).